The following is a 293-amino-acid chain: Small ribosomal subunit protein uS2m (293 aa).

The segment covering 21–38 has biased composition (low complexity); the sequence is GRAAQRGRTLGSAAAAAA. Disordered stretches follow at residues 21-49 and 263-293; these read GRAAQRGRTLGSAAAAAAREPERDSDRSA and QGAPGPHPANPAAPGAPSPGAQAQLGMGHSP. Positions 39–49 are enriched in basic and acidic residues; the sequence is REPERDSDRSA. Pro residues predominate over residues 267–279; that stretch reads GPHPANPAAPGAP.

The protein belongs to the universal ribosomal protein uS2 family. In terms of assembly, component of the mitochondrial ribosome small subunit (28S) which comprises a 12S rRNA and about 30 distinct proteins.

The protein localises to the mitochondrion. In terms of biological role, required for mitoribosome formation and stability, and mitochondrial translation. This Bos taurus (Bovine) protein is Small ribosomal subunit protein uS2m (MRPS2).